A 779-amino-acid polypeptide reads, in one-letter code: Phosphoribosylformylglycinamidine synthase subunit PurL (779 aa).

His-52 is an active-site residue. Tyr-55 and Lys-94 together coordinate ATP. Glu-96 contributes to the Mg(2+) binding site. Residues 97 to 100 (SHNH) and Arg-119 contribute to the substrate site. The active-site Proton acceptor is His-98. Asp-120 is a Mg(2+) binding site. Gln-243 is a substrate binding site. Asp-271 is a binding site for Mg(2+). 315-317 (ESQ) contacts substrate. Residues Asn-523 and Gly-560 each coordinate ATP. Asn-561 is a Mg(2+) binding site. Ser-563 is a substrate binding site.

Belongs to the FGAMS family. In terms of assembly, monomer. Part of the FGAM synthase complex composed of 1 PurL, 1 PurQ and 2 PurS subunits.

It is found in the cytoplasm. The catalysed reaction is N(2)-formyl-N(1)-(5-phospho-beta-D-ribosyl)glycinamide + L-glutamine + ATP + H2O = 2-formamido-N(1)-(5-O-phospho-beta-D-ribosyl)acetamidine + L-glutamate + ADP + phosphate + H(+). It functions in the pathway purine metabolism; IMP biosynthesis via de novo pathway; 5-amino-1-(5-phospho-D-ribosyl)imidazole from N(2)-formyl-N(1)-(5-phospho-D-ribosyl)glycinamide: step 1/2. Part of the phosphoribosylformylglycinamidine synthase complex involved in the purines biosynthetic pathway. Catalyzes the ATP-dependent conversion of formylglycinamide ribonucleotide (FGAR) and glutamine to yield formylglycinamidine ribonucleotide (FGAM) and glutamate. The FGAM synthase complex is composed of three subunits. PurQ produces an ammonia molecule by converting glutamine to glutamate. PurL transfers the ammonia molecule to FGAR to form FGAM in an ATP-dependent manner. PurS interacts with PurQ and PurL and is thought to assist in the transfer of the ammonia molecule from PurQ to PurL. The sequence is that of Phosphoribosylformylglycinamidine synthase subunit PurL from Prochlorococcus marinus (strain MIT 9312).